A 613-amino-acid chain; its full sequence is Ribosome-associated molecular chaperone SSB1 (613 aa).

The interval 1 to 391 (MADGVFQGAI…ILTGQSTNDD (391 aa)) is nucleotide binding domain (NBD). ATP-binding positions include 16-18 (TTY), Lys73, 205-207 (GGT), 271-278 (ERAKRSLS), and Gly342. The inter-domain linker stretch occupies residues 392-402 (TKDLLLLDVIP). Residues 403–613 (LSLGVAMQGN…RAVTKGMATR (211 aa)) form a substrate binding domain (SBD) region. The tract at residues 516-612 (TEEIEKMISD…KRAVTKGMAT (97 aa)) is lid domain (SBDalpha). The short motif at 574–582 (IEAALSDAL) is the Nuclear export signal element.

This sequence belongs to the heat shock protein 70 family. Ssb-type Hsp70 subfamily. Binds to ribosomes. Binds close to the ribosomal tunnel exit via contacts with both ribosomal proteins and rRNA. Directly interacts with nascent polypeptides. This interaction is dependent on the ribosome-associated complex (RAC). Interacts with SSE1. Interacts with FES1.

Its subcellular location is the cytoplasm. The enzyme catalyses ATP + H2O = ADP + phosphate + H(+). Ribosome-bound, Hsp70-type chaperone that assists in the cotranslational folding of newly synthesized proteins in the cytosol. Stimulates folding by interacting with nascent chains, binding to short, largely hydrophobic sequences exposed by unfolded proteins, thereby stabilizing longer, more slowly translated, and aggregation-prone nascent polypeptides and domains that cannot fold stably until fully synthesized. The Hsp70-protein substrate interaction depends on ATP-binding and on allosteric regulation between the NBD and the SBD. The ATP-bound state is characterized by a fast exchange rate of substrate (low affinity state), while in the ADP-bound state exchange is much slower (high affinity state). During the Hsp70 cycle, the chaperone switches between the ATP-bound state (open conformation) and the ADP-bound state (closed conformation) by major conformational rearrangements involving mainly the lid domain. Ssb cooperates with a specific Hsp40/Hsp70 co-chaperone termed the ribosome-associated complex (RAC), which stimulates the ATPase activity of the ribosome-associated pool of Ssbs and switches it to the high affinity substrate binding state. Hsp110 chaperone SSE1 and FES1 act as nucleotide exchange factors that cause substrate release. In Candida albicans (strain WO-1) (Yeast), this protein is Ribosome-associated molecular chaperone SSB1 (SSB1).